The primary structure comprises 526 residues: ATP synthase subunit alpha 2 (526 aa).

171-178 provides a ligand contact to ATP; the sequence is GDRQTGKT.

Belongs to the ATPase alpha/beta chains family. As to quaternary structure, F-type ATPases have 2 components, CF(1) - the catalytic core - and CF(0) - the membrane proton channel. CF(1) has five subunits: alpha(3), beta(3), gamma(1), delta(1), epsilon(1). CF(0) has four main subunits: a(1), b(1), b'(1) and c(9-12).

Its subcellular location is the cell inner membrane. The catalysed reaction is ATP + H2O + 4 H(+)(in) = ADP + phosphate + 5 H(+)(out). Functionally, produces ATP from ADP in the presence of a proton gradient across the membrane. The alpha chain is a regulatory subunit. In Chlorobium luteolum (strain DSM 273 / BCRC 81028 / 2530) (Pelodictyon luteolum), this protein is ATP synthase subunit alpha 2.